The primary structure comprises 206 residues: Urease accessory protein UreG (206 aa).

11 to 18 (GPVGAGKT) serves as a coordination point for GTP.

It belongs to the SIMIBI class G3E GTPase family. UreG subfamily. In terms of assembly, homodimer. UreD, UreF and UreG form a complex that acts as a GTP-hydrolysis-dependent molecular chaperone, activating the urease apoprotein by helping to assemble the nickel containing metallocenter of UreC. The UreE protein probably delivers the nickel.

The protein localises to the cytoplasm. Functionally, facilitates the functional incorporation of the urease nickel metallocenter. This process requires GTP hydrolysis, probably effectuated by UreG. The sequence is that of Urease accessory protein UreG from Ureaplasma parvum serovar 3 (strain ATCC 700970).